Reading from the N-terminus, the 282-residue chain is Bifunctional protein FolD (282 aa).

NADP(+) contacts are provided by residues 165 to 167 (NRS), S190, and I231.

Belongs to the tetrahydrofolate dehydrogenase/cyclohydrolase family. In terms of assembly, homodimer.

It catalyses the reaction (6R)-5,10-methylene-5,6,7,8-tetrahydrofolate + NADP(+) = (6R)-5,10-methenyltetrahydrofolate + NADPH. The enzyme catalyses (6R)-5,10-methenyltetrahydrofolate + H2O = (6R)-10-formyltetrahydrofolate + H(+). It participates in one-carbon metabolism; tetrahydrofolate interconversion. Functionally, catalyzes the oxidation of 5,10-methylenetetrahydrofolate to 5,10-methenyltetrahydrofolate and then the hydrolysis of 5,10-methenyltetrahydrofolate to 10-formyltetrahydrofolate. The chain is Bifunctional protein FolD from Clostridium botulinum (strain Okra / Type B1).